The primary structure comprises 109 residues: Nucleoid-associated protein swp_1717 (109 aa).

Residues 88 to 109 (QKDKMAEVTGGMQLPPGMKMPF) are disordered.

This sequence belongs to the YbaB/EbfC family. As to quaternary structure, homodimer.

It localises to the cytoplasm. It is found in the nucleoid. Its function is as follows. Binds to DNA and alters its conformation. May be involved in regulation of gene expression, nucleoid organization and DNA protection. This Shewanella piezotolerans (strain WP3 / JCM 13877) protein is Nucleoid-associated protein swp_1717.